The primary structure comprises 716 residues: Translation initiation factor IF-2 (716 aa).

The tract at residues 53-135 (GGAGVTSQKP…PLKPKKELPE (83 aa)) is disordered. Polar residues predominate over residues 57 to 83 (VTSQKPAETNKNKPQGINQQPAGNQPN). Low complexity predominate over residues 93–109 (VQNNQFNKNKKNNNNNK). Positions 217–386 (IRPPVVTIMG…LLVSEVEELK (170 aa)) constitute a tr-type G domain. The interval 226-233 (GHVDHGKT) is G1. Residue 226–233 (GHVDHGKT) participates in GTP binding. The tract at residues 251-255 (GITQH) is G2. A G3 region spans residues 272 to 275 (DTPG). GTP contacts are provided by residues 272 to 276 (DTPGH) and 326 to 329 (NKVD). The segment at 326-329 (NKVD) is G4. Residues 362 to 364 (SAL) form a G5 region.

It belongs to the TRAFAC class translation factor GTPase superfamily. Classic translation factor GTPase family. IF-2 subfamily.

The protein resides in the cytoplasm. One of the essential components for the initiation of protein synthesis. Protects formylmethionyl-tRNA from spontaneous hydrolysis and promotes its binding to the 30S ribosomal subunits. Also involved in the hydrolysis of GTP during the formation of the 70S ribosomal complex. In Bacillus velezensis (strain DSM 23117 / BGSC 10A6 / LMG 26770 / FZB42) (Bacillus amyloliquefaciens subsp. plantarum), this protein is Translation initiation factor IF-2.